Here is a 304-residue protein sequence, read N- to C-terminus: Putative ankyrin repeat protein R598 (304 aa).

ANK repeat units lie at residues 7–36, 77–107, 122–151, 152–181, 183–209, 210–239, and 265–293; these read NIVTDIKNAICKDDLDSFIILMENNPSINL, YISTVLREEVIKNCSVKILKYLFDMGLPVDF, GSNHYIKENPGQDTLSLLRLLIEYGVDVNA, HNYLPLYSAVSSKNFDKVKLLVENGANVLR, ANGNENSFYFKIDSIKYLLDNGVEIDM, NLSRALFLSIKDNSIECIQFYLELGADINK, and FDFTSLNKLAGNNNERIIDVLINEANVDI.

This Acanthamoeba polyphaga (Amoeba) protein is Putative ankyrin repeat protein R598.